We begin with the raw amino-acid sequence, 366 residues long: S-adenosylmethionine:tRNA ribosyltransferase-isomerase (366 aa).

The protein belongs to the QueA family. Monomer.

It is found in the cytoplasm. It catalyses the reaction 7-aminomethyl-7-carbaguanosine(34) in tRNA + S-adenosyl-L-methionine = epoxyqueuosine(34) in tRNA + adenine + L-methionine + 2 H(+). It participates in tRNA modification; tRNA-queuosine biosynthesis. Its function is as follows. Transfers and isomerizes the ribose moiety from AdoMet to the 7-aminomethyl group of 7-deazaguanine (preQ1-tRNA) to give epoxyqueuosine (oQ-tRNA). This Agrobacterium fabrum (strain C58 / ATCC 33970) (Agrobacterium tumefaciens (strain C58)) protein is S-adenosylmethionine:tRNA ribosyltransferase-isomerase.